Reading from the N-terminus, the 298-residue chain is Craniofacial development protein 1 (298 aa).

3 stretches are compositionally biased toward acidic residues: residues 1-18, 25-43, and 70-80; these read MEEF…DEDY, YSED…DGEE, and LEEEGEEDANE. 2 disordered regions span residues 1 to 158 and 191 to 223; these read MEEF…KPQE and FFKQ…SSGM. Serine 82, serine 85, and serine 86 each carry phosphoserine. Positions 98–112 are enriched in basic and acidic residues; sequence KGIESEDARKKKEDE. Serine 116 carries the phosphoserine modification. Composition is skewed to basic and acidic residues over residues 148–158 and 191–200; these read VKAEKLEKPQE and FFKQNEKEKP. Residue lysine 149 forms a Glycyl lysine isopeptide (Lys-Gly) (interchain with G-Cter in SUMO2) linkage. The segment at 177-216 is hydrophilic; the sequence is VIKEVDATSKEAKSFFKQNEKEKPQSNISSSVPSLSAGSG. Positions 205–217 are enriched in low complexity; it reads SSSVPSLSAGSGL. Phosphoserine is present on serine 215. A BCNT-C domain is found at 217-298; sequence LKRSSGMSSL…RDLRLSQMKP (82 aa). An N6-methyllysine modification is found at lysine 218. Serine 249 is modified (phosphoserine).

It is found in the chromosome. It localises to the centromere. The protein localises to the kinetochore. In terms of biological role, may play a role during embryogenesis. This chain is Craniofacial development protein 1 (CFDP1), found in Muntiacus reevesi (Reeves' muntjac).